The primary structure comprises 378 residues: Ribosomal RNA large subunit methyltransferase G (378 aa).

The protein belongs to the methyltransferase superfamily. RlmG family.

It localises to the cytoplasm. The catalysed reaction is guanosine(1835) in 23S rRNA + S-adenosyl-L-methionine = N(2)-methylguanosine(1835) in 23S rRNA + S-adenosyl-L-homocysteine + H(+). In terms of biological role, specifically methylates the guanine in position 1835 (m2G1835) of 23S rRNA. The chain is Ribosomal RNA large subunit methyltransferase G from Shigella boydii serotype 4 (strain Sb227).